The sequence spans 297 residues: Tyrosine recombinase XerD (297 aa).

One can recognise a Core-binding (CB) domain in the interval 1 to 86 (MNDLIDDFLH…SLRSFFHYLM (86 aa)). In terms of domain architecture, Tyr recombinase spans 107-291 (SLPKVLNLDD…TKLRLKDVYK (185 aa)). Active-site residues include Arg-147, Lys-171, His-243, Arg-246, and His-269. Tyr-278 acts as the O-(3'-phospho-DNA)-tyrosine intermediate in catalysis.

The protein belongs to the 'phage' integrase family. XerD subfamily. Forms a cyclic heterotetrameric complex composed of two molecules of XerC and two molecules of XerD.

The protein localises to the cytoplasm. Functionally, site-specific tyrosine recombinase, which acts by catalyzing the cutting and rejoining of the recombining DNA molecules. The XerC-XerD complex is essential to convert dimers of the bacterial chromosome into monomers to permit their segregation at cell division. It also contributes to the segregational stability of plasmids. This Listeria innocua serovar 6a (strain ATCC BAA-680 / CLIP 11262) protein is Tyrosine recombinase XerD.